Here is an 828-residue protein sequence, read N- to C-terminus: Glycerol-3-phosphate acyltransferase 1, mitochondrial (828 aa).

The Cytoplasmic portion of the chain corresponds to methionine 1 to glycine 87. Positions asparagine 80–valine 120 are important for mitochondrial localization. Residues leucine 88–arginine 118 lie within the membrane without spanning it. The Cytoplasmic portion of the chain corresponds to aspartate 119 to leucine 828. The short motif at histidine 230–aspartate 235 is the HXXXXD motif element. CoA is bound by residues arginine 278, arginine 279, lysine 288, arginine 293, and arginine 328. A Phosphoserine modification is found at serine 380. Arginine 462 is a CoA binding site. A phosphoserine mark is found at serine 688 and serine 695. Lysine 780 and lysine 784 each carry N6-acetyllysine.

Belongs to the GPAT/DAPAT family.

The protein resides in the mitochondrion outer membrane. It catalyses the reaction sn-glycerol 3-phosphate + an acyl-CoA = a 1-acyl-sn-glycero-3-phosphate + CoA. The catalysed reaction is sn-glycerol 3-phosphate + hexadecanoyl-CoA = 1-hexadecanoyl-sn-glycero-3-phosphate + CoA. It carries out the reaction (9Z,12Z)-octadecadienoyl-CoA + sn-glycerol 3-phosphate = 1-(9Z,12Z)-octadecadienoyl-sn-glycero-3-phosphate + CoA. The enzyme catalyses sn-glycerol 3-phosphate + (9Z)-octadecenoyl-CoA = 1-(9Z-octadecenoyl)-sn-glycero-3-phosphate + CoA. It catalyses the reaction sn-glycerol 3-phosphate + octadecanoyl-CoA = 1-octadecanoyl-sn-glycero-3-phosphate + CoA. The catalysed reaction is dodecanoyl-CoA + sn-glycerol 3-phosphate = 1-dodecanoyl-sn-glycerol 3-phosphate + CoA. It carries out the reaction 1-acyl-sn-glycero-3-phospho-(1'-sn-glycerol) + an acyl-CoA = a 1,2-diacyl-sn-glycero-3-phospho-(1'-sn-glycerol) + CoA. The protein operates within phospholipid metabolism; CDP-diacylglycerol biosynthesis; CDP-diacylglycerol from sn-glycerol 3-phosphate: step 1/3. Mitochondrial membrane protein that catalyzes the essential first step of biosynthesis of glycerolipids such as triglycerides, phosphatidic acids and lysophosphatidic acids. Esterifies acyl-group from acyl-coenzyme A (acyl-CoA) to the sn-1 position of glycerol-3-phosphate, to produce lysophosphatidic acid. Has a narrow hydrophobic binding cleft that selects for a linear acyl chain. Catalytic activity is higher for substrates with a 16-carbon acyl chain. In Rattus norvegicus (Rat), this protein is Glycerol-3-phosphate acyltransferase 1, mitochondrial.